The sequence spans 134 residues: RuBisCO chaperone RbcX (134 aa).

A disordered region spans residues serine 97–glutamate 134. Positions glutamine 111–proline 122 are enriched in polar residues.

It belongs to the RbcX family. Homodimer (RbcX2). Interacts with the exposed C-terminal peptide of RbcL ('Glu-459-Asp-468'); binds 2 RbcL peptides per RbcX2, stapling them into an RbcL2 dimer. A slightly longer peptide binds with a higher affinity, but no long-term stable interaction with RbcL is detected. Contacts a second RbcL monomer via its peripheral polar surface.

The protein localises to the carboxysome. Its subcellular location is the cytoplasm. Its function is as follows. An RbcL-specific chaperone. Required for assembly of the RbcL8 core, acting downstream of the major chaperonin (GroEL-GroES). Acts on newly folded RbcL, has a transient dynamic interaction with RbcL and is eventually displaced by RbcS. The central cleft of the RbcX homodimer (RbcX2) binds the C-terminus of an RbcL monomer, stabilizing the C-terminus and probably preventing its reassociation with chaperonin GroEL-ES. At the same time the peripheral region of RbcX2 binds a second RbcL monomer, bridging the RbcL homodimers in the correct orientation. The RbcX2(2)-bound RbcL dimers then assemble into the RbcL8 core (RbcL8-(RbcX2)8). RbcS binding triggers the release of RbcX2. Required for optimal reconstitution of RuBisCO into its RbcL8S8 holoenzyme form upon expression of rbcL-rbcS subunits in E.coli, and probably also in situ. A frameshift mutation that replaces half the protein reduces accumulation of both RbcL and RbcS subunits and halves activity of RuBisCO in situ and in E.coli. The protein is RuBisCO chaperone RbcX of Picosynechococcus sp. (strain ATCC 27264 / PCC 7002 / PR-6) (Agmenellum quadruplicatum).